The chain runs to 717 residues: Nuclear factor of activated T-cells, cytoplasmic 1 (717 aa).

A disordered region spans residues 1-38 (MPNTSFPVPSKFPLGPPAAVCGSGETLRPAPPSGGTMK). Residues 120–125 (PRIEIT) form a calcineurin-binding region. The transactivation domain A (TAD-A) stretch occupies residues 128-220 (LGLHHGSGQF…CVSPKTTDPE (93 aa)). Residues 202-298 (PQTSPWQSPC…PHGSPRVSVT (97 aa)) are disordered. Polar residues predominate over residues 203–216 (QTSPWQSPCVSPKT). 2 tandem repeats follow at residues 205–221 (SPWQ…DPEE) and 235–251 (SPRH…ITEE). The tract at residues 205 to 300 (SPWQSPCVSP…GSPRVSVTED (96 aa)) is 3 X SP repeats. Phosphoserine occurs at positions 235 and 239. Polar residues predominate over residues 238–250 (HSPSTSPRASITE). Ser247 carries the post-translational modification Phosphoserine; by PKA. The Nuclear localization signal motif lies at 267-269 (KRK). 2 positions are modified to phosphoserine; by PKA: Ser271 and Ser296. The stretch at 284-300 (SPTPSPHGSPRVSVTED) is repeat 3. The Nuclear export signal signature appears at 312-323 (SAIVAAINALTT). Positions 411–593 (PSLPALDWQL…NPIECSQRSA (183 aa)) constitute an RHD domain. Residues 440-447 (RAHYETEG) mediate DNA binding. The short motif at 683-685 (KRK) is the Nuclear localization signal element.

Member of the multicomponent NFATC transcription complex that consists of at least two components, a pre-existing cytoplasmic component NFATC2 and an inducible nuclear component NFATC1. Other members such as NFATC4, NFATC3 or members of the activating protein-1 family, MAF, GATA4 and Cbp/p300 can also bind the complex. NFATC proteins bind to DNA as monomers. Interacts with HOMER2 and HOMER3; this interaction may compete with calcineurin/PPP3CA-binding and hence prevent NFATC1 dephosphorylation and activation. Interacts with TLE6/GRG6. Phosphorylated by NFATC-kinase and GSK3B; phosphorylation induces NFATC1 nuclear exit and dephosphorylation by calcineurin promotes nuclear import. Phosphorylation by PKA and DYRK2 negatively modulates nuclear accumulation, and promotes subsequent phosphorylation by GSK3B or casein kinase 1. As to expression, expressed in the submandibular gland (at protein level). Expressed in basal epidermal cells (at protein level). Expressed in spleen, skeletal muscle and skin. Express in the lung and thymus. Weakly expressed in heart, brain, liver and kidney. Not expressed in testis. Expressed in osteoclasts. Also expressed during TNFSF11/RANKL-induced differentiation of bone marrow-derived macrophages to osteoclasts.

It is found in the cytoplasm. The protein resides in the nucleus. In terms of biological role, plays a role in the inducible expression of cytokine genes in T-cells, especially in the induction of the IL-2 or IL-4 gene transcription. Also controls gene expression in embryonic cardiac cells. Could regulate not only the activation and proliferation but also the differentiation and programmed death of T-lymphocytes as well as lymphoid and non-lymphoid cells. Required for osteoclastogenesis and regulates many genes important for osteoclast differentiation and function. The polypeptide is Nuclear factor of activated T-cells, cytoplasmic 1 (Nfatc1) (Mus musculus (Mouse)).